A 2164-amino-acid polypeptide reads, in one-letter code: Hemagglutinin A (2164 aa).

The signal sequence occupies residues 1–25 (MRKLNSLFSLAVLLSLLCWGQTAAA). 3 peptidase C25-like regions span residues 26–539 (QGGP…TPPP), 540–991 (GGSS…TPPP), and 992–1443 (GGTS…TPPP). Disordered stretches follow at residues 493–512 (WDAP…LSES) and 520–541 (SWKT…PPGG). Residues 496-508 (PNGTPNPNPGTTT) show a composition bias toward low complexity.

This sequence belongs to the peptidase C25 family.

Its function is as follows. Agglutinates erythrocytes. This chain is Hemagglutinin A (hagA), found in Porphyromonas gingivalis (strain ATCC BAA-308 / W83).